A 419-amino-acid polypeptide reads, in one-letter code: RING finger protein 150 (419 aa).

An N-terminal signal peptide occupies residues 1-34 (MALSVIQACRSLALSTWLLSFCFVHLLCLDFTVA). Residues 35–197 (EKEEWYTAFV…NLQKYVSRTS (163 aa)) are Extracellular-facing. The region spanning 70-172 (SLKREARGVL…PKGRELVLLM (103 aa)) is the PA domain. Residues 198 to 218 (VVFVSISFIILMIISLAWLVF) traverse the membrane as a helical segment. Over 219–419 (YYIQRFRYAN…IDTPTDDPKC (201 aa)) the chain is Cytoplasmic. The segment at 267-308 (CAVCIEGYKPNDVVRILPCRHLFHKCCVDPWLVDHRTCPMCK) adopts an RING-type; atypical zinc-finger fold. Residues 374 to 419 (SEPLSQDTMPTEQSELQPIASGSSDVSLTTGAGHSDIDTPTDDPKC) form a disordered region. Over residues 376–405 (PLSQDTMPTEQSELQPIASGSSDVSLTTGA) the composition is skewed to polar residues.

The protein localises to the membrane. This chain is RING finger protein 150 (rnf150), found in Danio rerio (Zebrafish).